Consider the following 216-residue polypeptide: MDANKMIINLAVLGKTQSGKSSAGNVLLGSADFYSRFAPGSVTKDCSLGRSCHIHGFMRRGGHEISLQIQVLDTPGYPHSKLSTRCVKQEVKKALEHHFGQEGLHLALLVHRADMPFFGQEASDSVQLIQELLGDSWKNYTAILFTHAEKIKEAGLSEEEYLCEASDALLTLLNSVQHRHIFLYERGNSWSEQRIKILERIMEFIKENHFQVLSFT.

An AIG1-type G domain is found at 5-216 (KMIINLAVLG…ENHFQVLSFT (212 aa)). Residues 14–22 (GKTQSGKSS), Ser-35, and 147–149 (HAE) contribute to the GTP site.

Belongs to the TRAFAC class TrmE-Era-EngA-EngB-Septin-like GTPase superfamily. AIG1/Toc34/Toc159-like paraseptin GTPase family. IAN subfamily.

The chain is GTPase IMAP family member GIMD1 (Gimd1) from Rattus norvegicus (Rat).